We begin with the raw amino-acid sequence, 274 residues long: tRNA dimethylallyltransferase (274 aa).

The interaction with substrate tRNA stretch occupies residues 9–12; that stretch reads DSLS.

It belongs to the IPP transferase family. Monomer. Mg(2+) is required as a cofactor.

It catalyses the reaction adenosine(37) in tRNA + dimethylallyl diphosphate = N(6)-dimethylallyladenosine(37) in tRNA + diphosphate. In terms of biological role, catalyzes the transfer of a dimethylallyl group onto the adenine at position 37 in tRNAs that read codons beginning with uridine, leading to the formation of N6-(dimethylallyl)adenosine (i(6)A). The polypeptide is tRNA dimethylallyltransferase (miaA) (Helicobacter pylori (strain P12)).